The primary structure comprises 295 residues: ATP synthase subunit a (295 aa).

The next 7 membrane-spanning stretches (helical) occupy residues 41-61 (KWSA…WLGF), 101-121 (YLTI…IPVA), 129-149 (IALP…VGIR), 161-181 (LVPA…IEFV), 191-211 (LAIR…VFAL), 222-242 (FVFG…ELMI), and 244-264 (VLQA…AISS).

It belongs to the ATPase A chain family. F-type ATPases have 2 components, CF(1) - the catalytic core - and CF(0) - the membrane proton channel. CF(1) has five subunits: alpha(3), beta(3), gamma(1), delta(1), epsilon(1). CF(0) has three main subunits: a(1), b(2) and c(9-12). The alpha and beta chains form an alternating ring which encloses part of the gamma chain. CF(1) is attached to CF(0) by a central stalk formed by the gamma and epsilon chains, while a peripheral stalk is formed by the delta and b chains.

The protein localises to the cell membrane. Its function is as follows. Key component of the proton channel; it plays a direct role in the translocation of protons across the membrane. In Parafrankia sp. (strain EAN1pec), this protein is ATP synthase subunit a.